We begin with the raw amino-acid sequence, 461 residues long: Arginine biosynthesis bifunctional protein ArgJ, chloroplastic (461 aa).

The substrate site is built by Thr-202, Lys-228, Thr-239, Glu-326, Asn-456, and Thr-461. Thr-239 functions as the Nucleophile in the catalytic mechanism.

Belongs to the ArgJ family. In terms of assembly, heterodimer of an alpha and a beta chain.

It localises to the plastid. It is found in the chloroplast. The catalysed reaction is N(2)-acetyl-L-ornithine + L-glutamate = N-acetyl-L-glutamate + L-ornithine. It carries out the reaction L-glutamate + acetyl-CoA = N-acetyl-L-glutamate + CoA + H(+). Its pathway is amino-acid biosynthesis; L-arginine biosynthesis; L-ornithine and N-acetyl-L-glutamate from L-glutamate and N(2)-acetyl-L-ornithine (cyclic): step 1/1. It functions in the pathway amino-acid biosynthesis; L-arginine biosynthesis; N(2)-acetyl-L-ornithine from L-glutamate: step 1/4. Its function is as follows. Catalyzes two activities which are involved in the cyclic version of arginine biosynthesis: the synthesis of acetylglutamate from glutamate and acetyl-CoA, and of ornithine by transacetylation between acetylornithine and glutamate. The protein is Arginine biosynthesis bifunctional protein ArgJ, chloroplastic of Ostreococcus lucimarinus (strain CCE9901).